The following is a 98-amino-acid chain: NADH-ubiquinone oxidoreductase chain 4L (98 aa).

3 helical membrane passes run 1-21, 29-49, and 61-81; these read MPVV…GLLI, SLLC…VTVL, and IILL…LVMV.

Belongs to the complex I subunit 4L family. As to quaternary structure, core subunit of respiratory chain NADH dehydrogenase (Complex I) which is composed of 45 different subunits.

Its subcellular location is the mitochondrion inner membrane. It carries out the reaction a ubiquinone + NADH + 5 H(+)(in) = a ubiquinol + NAD(+) + 4 H(+)(out). Its function is as follows. Core subunit of the mitochondrial membrane respiratory chain NADH dehydrogenase (Complex I) which catalyzes electron transfer from NADH through the respiratory chain, using ubiquinone as an electron acceptor. Part of the enzyme membrane arm which is embedded in the lipid bilayer and involved in proton translocation. The chain is NADH-ubiquinone oxidoreductase chain 4L (MT-ND4L) from Ursus maritimus (Polar bear).